Consider the following 239-residue polypeptide: Bidirectional sugar transporter SWEET8 (239 aa).

Over 1–6 (MVDAKQ) the chain is Extracellular. Residues 7–27 (VRFIIGVIGNVISFGLFAAPA) form a helical membrane-spanning segment. One can recognise a MtN3/slv 1 domain in the interval 9-98 (FIIGVIGNVI…VYLMYCGHKK (90 aa)). Residues 28-44 (KTFWRIFKKKSVEEFSY) lie on the Cytoplasmic side of the membrane. The helical transmembrane segment at 45 to 65 (VPYVATVMNCMLWVFYGLPVV) threads the bilayer. Residues 66-69 (HKDS) lie on the Extracellular side of the membrane. The helical transmembrane segment at 70 to 90 (ILVSTINGVGLVIELFYVGVY) threads the bilayer. The Cytoplasmic segment spans residues 91 to 103 (LMYCGHKKNHRRN). A helical transmembrane segment spans residues 104–124 (ILGFLALEVILVVAIILITLF). Topologically, residues 125 to 135 (ALKGDFVKQTF) are extracellular. Residues 134–185 (TFVGVICDVFNIAMYGAPSLAIIKVVKTKSVEYMPFLLSLVCFVNAGIWTTY) form the MtN3/slv 2 domain. Residues 136 to 156 (VGVICDVFNIAMYGAPSLAII) traverse the membrane as a helical segment. Over 157–168 (KVVKTKSVEYMP) the chain is Cytoplasmic. A helical transmembrane segment spans residues 169–189 (FLLSLVCFVNAGIWTTYSLIF). The Extracellular segment spans residues 190–194 (KIDYY). A helical transmembrane segment spans residues 195 to 215 (VLASNGIGTFLALSQLIVYFM). The Cytoplasmic segment spans residues 216-239 (YYKSTPKEKTVKPSEVEISATERV).

This sequence belongs to the SWEET sugar transporter family. As to quaternary structure, forms homooligomers and heterooligomers with SWEET4, SWEET5, SWEET6, SWEET7, SWEET9, SWEET10, SWEET11, SWEET13, SWEET15, SWEET16 and SWEET17. Expressed in inflorescences, embryo sacs and pollen, and at a lower level in stems. Barely detected in roots, leaves and seedlings.

The protein resides in the cell membrane. Mediates both low-affinity uptake and efflux of sugar across the plasma membrane. Required, in pollen, for microspore cell integrity and primexine pattern formation. The polypeptide is Bidirectional sugar transporter SWEET8 (Arabidopsis thaliana (Mouse-ear cress)).